The following is a 496-amino-acid chain: ATP synthase subunit beta 1 (496 aa).

Gly-167–Thr-174 lines the ATP pocket. A disordered region spans residues Arg-474–Ala-496. Positions Ala-476–Pro-489 are enriched in low complexity.

This sequence belongs to the ATPase alpha/beta chains family. As to quaternary structure, F-type ATPases have 2 components, CF(1) - the catalytic core - and CF(0) - the membrane proton channel. CF(1) has five subunits: alpha(3), beta(3), gamma(1), delta(1), epsilon(1). CF(0) has three main subunits: a(1), b(2) and c(9-12). The alpha and beta chains form an alternating ring which encloses part of the gamma chain. CF(1) is attached to CF(0) by a central stalk formed by the gamma and epsilon chains, while a peripheral stalk is formed by the delta and b chains.

It is found in the cell inner membrane. It catalyses the reaction ATP + H2O + 4 H(+)(in) = ADP + phosphate + 5 H(+)(out). In terms of biological role, produces ATP from ADP in the presence of a proton gradient across the membrane. The catalytic sites are hosted primarily by the beta subunits. The sequence is that of ATP synthase subunit beta 1 from Paraburkholderia xenovorans (strain LB400).